The sequence spans 353 residues: Chemerin-like receptor 2 (353 aa).

Topologically, residues 1 to 41 (MEVSREMLFEELDNYSYALEYYSQEPDAEENVYPGIVHWIS) are extracellular. An N-linked (GlcNAc...) asparagine glycan is attached at N14. The chain crosses the membrane as a helical span at residues 42–62 (LLLYALAFVLGIPGNAIVIWF). Over 63 to 73 (MGFKWKKTVTT) the chain is Cytoplasmic. Residues 74 to 94 (LWFLNLAIADFVFVLFLPLYI) traverse the membrane as a helical segment. Residues 95–112 (SYVALSFHWPFGRWLCKL) lie on the Extracellular side of the membrane. Residues C110 and C187 are joined by a disulfide bond. The helical transmembrane segment at 113 to 133 (NSFIAQLNMFSSVFFLTVISL) threads the bilayer. Residues 134-154 (DRYIHLIHPGLSHPHRTLKNS) are Cytoplasmic-facing. Residues 155 to 175 (LLVVLFVWLLASLLGGPTLYF) form a helical membrane-spanning segment. The Extracellular portion of the chain corresponds to 176-210 (RDTVEVNNRIICYNNFQEYELTLMRHHVLTWVKFL). The helical transmembrane segment at 211–231 (FGYLLPLLTMSSCYLCLIFKT) threads the bilayer. Over 232–247 (KKQNILISSKHLWMIL) the chain is Cytoplasmic. A helical transmembrane segment spans residues 248 to 268 (SVVIAFMVCWTPFHLFSIWEL). Over 269–286 (SIHHNSSFQNVLQGGIPL) the chain is Extracellular. The chain crosses the membrane as a helical span at residues 287-307 (STGLAFLNSCLNPILYVLISK). At 308–353 (KFQARFRASVAEVLKRSLWEASCSGTVSEQLRSAETKSLSLLETAQ) the chain is on the cytoplasmic side.

It belongs to the chemokine-like receptor (CMKLR) family.

The protein resides in the cell membrane. Receptor for chemoattractant adipokine chemerin/RARRES2 suggesting a role for this receptor in the regulation of inflammation and energy homesotasis. Signals mainly via beta-arrestin pathway. Binding of RARRES2 activates weakly G proteins, calcium mobilization and MAPK1/MAPK3 (ERK1/2) phosphorylation too. Acts also as a receptor for TAFA1, mediates its effects on neuronal stem-cell proliferation and differentiation via the activation of ROCK/ERK and ROCK/STAT3 signaling pathway. In Rattus norvegicus (Rat), this protein is Chemerin-like receptor 2 (Cmklr2).